A 376-amino-acid polypeptide reads, in one-letter code: Ribosomal RNA large subunit methyltransferase G (376 aa).

Belongs to the methyltransferase superfamily. RlmG family.

It is found in the cytoplasm. The catalysed reaction is guanosine(1835) in 23S rRNA + S-adenosyl-L-methionine = N(2)-methylguanosine(1835) in 23S rRNA + S-adenosyl-L-homocysteine + H(+). Specifically methylates the guanine in position 1835 (m2G1835) of 23S rRNA. The sequence is that of Ribosomal RNA large subunit methyltransferase G from Vibrio vulnificus (strain CMCP6).